A 1031-amino-acid polypeptide reads, in one-letter code: Protein translocase subunit SecA (1031 aa).

ATP-binding positions include Q143, 161 to 165, and D662; that span reads GEGKT. Residues C1015, C1017, C1026, and C1027 each contribute to the Zn(2+) site.

It belongs to the SecA family. As to quaternary structure, monomer and homodimer. Part of the essential Sec protein translocation apparatus which comprises SecA, SecYEG and auxiliary proteins SecDF. Other proteins may also be involved. Zn(2+) serves as cofactor.

It localises to the cell inner membrane. The protein localises to the cytoplasm. The catalysed reaction is ATP + H2O + cellular proteinSide 1 = ADP + phosphate + cellular proteinSide 2.. Its function is as follows. Part of the Sec protein translocase complex. Interacts with the SecYEG preprotein conducting channel. Has a central role in coupling the hydrolysis of ATP to the transfer of proteins into and across the cell membrane, serving as an ATP-driven molecular motor driving the stepwise translocation of polypeptide chains across the membrane. The sequence is that of Protein translocase subunit SecA from Chlorobaculum tepidum (strain ATCC 49652 / DSM 12025 / NBRC 103806 / TLS) (Chlorobium tepidum).